A 98-amino-acid chain; its full sequence is Dehydrogenase acuH (98 aa).

It participates in secondary metabolite biosynthesis. Dehydrogenase; part of the gene cluster that mediates the biosynthesis of aculins. The pathway begins with the synthesis of 6-methylsalicylic acid by the polyketide synthase (PKS) acuA via condensation of acetate and malonate units. The 6-methylsalicylic acid decarboxylase acuB then catalyzes the decarboxylation of 6-methylsalicylic acid to yield m-cresol (also known as 3-methylphenol). These first reactions occur in the cytosol. The intermediate m-cresol is then transported into the endoplasmic reticulum where the cytochrome P450 monooxygenase acuC converts it to m-hydroxybenzyl alcohol, which is further converted to gentisyl alcohol by the cytochrome P450 monooxygenase acuD. Gentisyl alcohol is further oxidized by the oxidoreductase acuE that probably catalyzes hydroxylation of the aromatic ring. The aromatic system might then be opened by oxidation through a Baeyer-Villiger type of oxidation, which could be catalyzed by acuF, with the carboxylic acid at C-1 subsequently reduced to an aldehyde by acuG. Subsequently, a hemiacetal is formed, before the dehydrogenase acuH would reduce the double bond between C-4 and C-6. Finally, keto-enol tautomerism results in formation of aculinic acid, which exists as two diastereomers (both R/S configurations at C-1) by non-enzymatic hemiacetal formation. The carboxypeptidase acuI could be involved in the linking of aculinic acid to an aculene A moiety produced by the aculene biosynthesis cluster and which leads to the production of aculin A. AcuI may also be involved in the attachment of proline to aculinic acid to form epi-aculins A and B. This is Dehydrogenase acuH from Aspergillus aculeatus (strain ATCC 16872 / CBS 172.66 / WB 5094).